We begin with the raw amino-acid sequence, 187 residues long: GTP cyclohydrolase 1 (187 aa).

Positions 76, 79, and 148 each coordinate Zn(2+).

Belongs to the GTP cyclohydrolase I family. In terms of assembly, toroid-shaped homodecamer, composed of two pentamers of five dimers.

It catalyses the reaction GTP + H2O = 7,8-dihydroneopterin 3'-triphosphate + formate + H(+). Its pathway is cofactor biosynthesis; 7,8-dihydroneopterin triphosphate biosynthesis; 7,8-dihydroneopterin triphosphate from GTP: step 1/1. This is GTP cyclohydrolase 1 from Acetivibrio thermocellus (strain ATCC 27405 / DSM 1237 / JCM 9322 / NBRC 103400 / NCIMB 10682 / NRRL B-4536 / VPI 7372) (Clostridium thermocellum).